Consider the following 258-residue polypeptide: Bidirectional sugar transporter SWEET9 (258 aa).

The Extracellular segment spans residues 1–7 (MFLKVHE). The helical transmembrane segment at 8–28 (IAFLFGLLGNIVSFGVFLSPV) threads the bilayer. Residues 10-96 (FLFGLLGNIV…FLYILYAPRE (87 aa)) enclose the MtN3/slv 1 domain. Topologically, residues 29–42 (PTFYGIYKKKSSKG) are cytoplasmic. A helical membrane pass occupies residues 43–63 (FQSIPYICALASATLLLYYGI). Topologically, residues 64–69 (MKTHAY) are extracellular. Residues 70–90 (LIISINTFGCFIEISYLFLYI) traverse the membrane as a helical segment. At 91–103 (LYAPREAKISTLK) the chain is on the cytoplasmic side. Residues 104–124 (LIVICNIGGLGLLILLVNLLV) form a helical membrane-spanning segment. The Extracellular portion of the chain corresponds to 125-131 (PKQHRVS). Residues 132-152 (TVGWVCAAYSLAVFASPLSVM) form a helical membrane-spanning segment. The region spanning 132–216 (TVGWVCAAYS…ILYMMYQGST (85 aa)) is the MtN3/slv 2 domain. The Cytoplasmic portion of the chain corresponds to 153 to 165 (RKVIKTKSVEYMP). A helical transmembrane segment spans residues 166-186 (FLLSLSLTLNAVMWFFYGLLI). Residues 187–189 (KDK) are Extracellular-facing. A helical membrane pass occupies residues 190 to 210 (FIAMPNILGFLFGVAQMILYM). Topologically, residues 211–258 (MYQGSTKTDLPTENQLANKTDVNEVPIVAVELPDVGSDNVEGSVRPMK) are cytoplasmic.

It belongs to the SWEET sugar transporter family. Forms heterooligomers with SWEET1, SWEET5, SWEET8, SWEET11, SWEET13, SWEET16 and SWEET17. As to expression, specifically expressed in nectaries, mostly in the lower half of nectary parenchyma.

It is found in the cell membrane. The protein localises to the cytoplasmic vesicle membrane. Its subcellular location is the golgi apparatus. It localises to the trans-Golgi network membrane. Mediates both low-affinity uptake and efflux of sugar across the plasma membrane. Nectary-specific sugar transporter required for nectar production by mediating the secretion of sucrose from the nectary parenchyma to the extracellular space. The chain is Bidirectional sugar transporter SWEET9 from Arabidopsis thaliana (Mouse-ear cress).